Reading from the N-terminus, the 65-residue chain is MKAKDIRALTTDEMLEKEKQYKEELFNLRFQQATGQLENTARLSKVRKNIARIKTILSEKALENN.

It belongs to the universal ribosomal protein uL29 family.

The protein is Large ribosomal subunit protein uL29 of Lactobacillus acidophilus (strain ATCC 700396 / NCK56 / N2 / NCFM).